The chain runs to 167 residues: Protein-export protein SecB (167 aa).

A disordered region spans residues 1-20; it reads MASNDDAPVGAANGNGNTGA.

It belongs to the SecB family. Homotetramer, a dimer of dimers. One homotetramer interacts with 1 SecA dimer.

Its subcellular location is the cytoplasm. Functionally, one of the proteins required for the normal export of preproteins out of the cell cytoplasm. It is a molecular chaperone that binds to a subset of precursor proteins, maintaining them in a translocation-competent state. It also specifically binds to its receptor SecA. This is Protein-export protein SecB from Mesorhizobium japonicum (strain LMG 29417 / CECT 9101 / MAFF 303099) (Mesorhizobium loti (strain MAFF 303099)).